A 480-amino-acid chain; its full sequence is Iroquois-class homeodomain protein IRX-1 (480 aa).

Positions 125–188 form a DNA-binding region, homeobox; TALE-type; that stretch reads YGDPGRPKNA…ANARRRLKKE (64 aa). 3 disordered regions span residues 190–268, 280–354, and 401–480; these read KVTW…QGSP, SPLG…PLQH, and PHGP…LPSA. The segment covering 210-228 has biased composition (acidic residues); sequence TEGDPEKAEDDEEIDLESI. Residues 229–239 are compositionally biased toward basic and acidic residues; sequence DIDKIDEHDGD. The residue at position 241 (Ser241) is a Phosphoserine. Low complexity-rich tracts occupy residues 252-262 and 340-351; these read PHAPAAPSALA and HPGAHGPSAGAP. A compositionally biased stretch (pro residues) spans 404–417; the sequence is PHLPAPPPPQPPVA.

It belongs to the TALE/IRO homeobox family.

It localises to the nucleus. This is Iroquois-class homeodomain protein IRX-1 (IRX1) from Homo sapiens (Human).